The sequence spans 156 residues: Small ribosomal subunit protein bS16 (156 aa).

The span at 85-120 (GESGAEGTLKSKSEKEAFVAPERDSVILPEEPKQEE) shows a compositional bias: basic and acidic residues. Residues 85–156 (GESGAEGTLK…APAEDAEKSE (72 aa)) are disordered. Over residues 132–150 (PAEEAAEAPAEEAAEAPAE) the composition is skewed to acidic residues.

Belongs to the bacterial ribosomal protein bS16 family.

This is Small ribosomal subunit protein bS16 from Micrococcus luteus (strain ATCC 4698 / DSM 20030 / JCM 1464 / CCM 169 / CCUG 5858 / IAM 1056 / NBRC 3333 / NCIMB 9278 / NCTC 2665 / VKM Ac-2230) (Micrococcus lysodeikticus).